We begin with the raw amino-acid sequence, 142 residues long: HTH-type transcriptional regulator MntR (142 aa).

One can recognise an HTH dtxR-type domain in the interval 1–63 (MPTPSMEDYI…YEKYRGLILT (63 aa)). Residues aspartate 8, glutamate 11, histidine 77, glutamate 99, glutamate 102, and histidine 103 each coordinate Mn(2+).

The protein belongs to the DtxR/MntR family. As to quaternary structure, homodimer.

The protein resides in the cytoplasm. DNA binding is strongly activated by Mn(2+). In terms of biological role, central regulator of manganese homeostasis. In Listeria monocytogenes serotype 4b (strain F2365), this protein is HTH-type transcriptional regulator MntR.